The following is a 676-amino-acid chain: MSDAVNVRKAIEELRREINRHNTLYYVDARPEISDYEFDRLMERLIELEKAFPDFVTPDSPSHRVGGAITREFPSVRHREPMLSLSNTYSLAEVEDFYSRVKKLLLVEGVREQDMAAELKFDGVAISLLYRDGLLVQGATRGDGTEGDDITTNLKTLSSVPLRIPLTSLPVIEGIERDIEIRGEVFMQKDDFARLNEARPEEDRFANPRNATAGTLKLQDSGEVARRRLNFVAYYLRLSSQDSFLLTQYDRLELLGQLGFFTGKHYRLCRDMKEIGDFIGYWAVERWNLPYETDGVVLKLNDVALWPRIGATAKSPRWAIAYKYPAQQAKTVLQGVAFQVGRLGTVTPVAELEPVRLAGSTVSRSTLHNFDEIERLGLMLHDRVIIEKSGEVIPKVIRVVLDERPENAEPVGVPSVCPECGASLEKPENEVSYYCPDQDSCPAQIRGRLLHFASRNALDIQSLGESLVAQLVQKGLVRDAGDLYLLQQPQLEALERMGRKSAHNLLRALQESREKSYERLLYALGIRHVGQATARELARAYETVEALQNASEEELATVPDVGPVVAHSVKDYFSKSSTQMLLRKLRDAGFPLRFTGPQKLINRNFEGVNVLFTGALERYGRQQASELVQQRGGRVVGSVSRSTGVVVAGSEPGSKLDKARKLGVKVISEDEFNAML.

NAD(+) is bound by residues 35-39 (DYEFD), 84-85 (SL), and glutamate 118. Residue lysine 120 is the N6-AMP-lysine intermediate of the active site. NAD(+) contacts are provided by arginine 141, glutamate 184, lysine 299, and lysine 323. The Zn(2+) site is built by cysteine 417, cysteine 420, cysteine 435, and cysteine 441. The BRCT domain maps to 600–676 (LINRNFEGVN…ISEDEFNAML (77 aa)).

This sequence belongs to the NAD-dependent DNA ligase family. LigA subfamily. It depends on Mg(2+) as a cofactor. The cofactor is Mn(2+).

The catalysed reaction is NAD(+) + (deoxyribonucleotide)n-3'-hydroxyl + 5'-phospho-(deoxyribonucleotide)m = (deoxyribonucleotide)n+m + AMP + beta-nicotinamide D-nucleotide.. Its function is as follows. DNA ligase that catalyzes the formation of phosphodiester linkages between 5'-phosphoryl and 3'-hydroxyl groups in double-stranded DNA using NAD as a coenzyme and as the energy source for the reaction. It is essential for DNA replication and repair of damaged DNA. This Chlorobium phaeobacteroides (strain DSM 266 / SMG 266 / 2430) protein is DNA ligase.